The sequence spans 225 residues: Ribose-5-phosphate isomerase A (225 aa).

Substrate contacts are provided by residues 27 to 30 (SGST), 80 to 83 (DGAD), and 93 to 96 (KGGG). Glutamate 102 functions as the Proton acceptor in the catalytic mechanism. Lysine 120 serves as a coordination point for substrate.

Belongs to the ribose 5-phosphate isomerase family. In terms of assembly, homodimer.

The enzyme catalyses aldehydo-D-ribose 5-phosphate = D-ribulose 5-phosphate. It functions in the pathway carbohydrate degradation; pentose phosphate pathway; D-ribose 5-phosphate from D-ribulose 5-phosphate (non-oxidative stage): step 1/1. Functionally, catalyzes the reversible conversion of ribose-5-phosphate to ribulose 5-phosphate. This Korarchaeum cryptofilum (strain OPF8) protein is Ribose-5-phosphate isomerase A.